The chain runs to 774 residues: MSCYNKALLIGNKVVVILVFLLCLVHSSESLRPLFACDPANGLTRTLRFCRANVPIHVRVQDLLGRLTLQEKIRNLVNNAAAVPRLGIGGYEWWSEALHGISDVGPGAKFGGAFPGATSFPQVITTAASFNQSLWEEIGRVVSDEARAMYNGGVAGLTYWSPNVNILRDPRWGRGQETPGEDPIVAAKYAASYVRGLQGTAAGNRLKVAACCKHYTAYDLDNWNGVDRFHFNAKVTQQDLEDTYNVPFKSCVYEGKVASVMCSYNQVNGKPTCADENLLKNTIRGQWRLNGYIVSDCDSVDVFFNQQHYTSTPEEAAARSIKAGLDLDCGPFLAIFTEGAVKKGLLTENDINLALANTLTVQMRLGMFDGNLGPYANLGPRDVCTPAHKHLALEAAHQGIVLLKNSARSLPLSPRRHRTVAVIGPNSDVTETMIGNYAGKACAYTSPLQGISRYARTLHQAGCAGVACKGNQGFGAAEAAAREADATVLVMGLDQSIEAETRDRTGLLLPGYQQDLVTRVAQASRGPVILVLMSGGPIDVTFAKNDPRVAAIIWAGYPGQAGGAAIANIIFGAANPGGKLPMTWYPQDYVAKVPMTVMAMRASGNYPGRTYRFYKGPVVFPFGFGLSYTTFTHSLAKSPLAQLSVSLSNLNSANTILNSSSHSIKVSHTNCNSFPKMPLHVEVSNTGEFDGTHTVFVFAEPPINGIKGLGVNKQLIAFEKVHVMAGAKQTVQVDVDACKHLGVVDEYGKRRIPMGEHKLHIGDLKHTILVQPQL.

Positions 1–30 (MSCYNKALLIGNKVVVILVFLLCLVHSSES) are cleaved as a signal peptide. Residue asparagine 131 is glycosylated (N-linked (GlcNAc...) asparagine). Aspartate 296 is an active-site residue. Asparagine 658 carries N-linked (GlcNAc...) asparagine glycosylation.

Belongs to the glycosyl hydrolase 3 family. Expressed in leaves, stems, seedlings, roots, inflorescences, siliques and developing seeds. Expressed in the vasculature of the roots, leaves, flowers and silique. Expressed in tissues undergoing secondary cell wall thickening such as protoxylem, metaxylem, intrafascicular cambium and fibers.

The protein localises to the secreted. Its subcellular location is the extracellular space. It is found in the extracellular matrix. It catalyses the reaction Hydrolysis of terminal non-reducing alpha-L-arabinofuranoside residues in alpha-L-arabinosides.. Functionally, involved in pectic arabinan modification in mucilage secretory cells. Also acts as a beta-D-xylosidase during the remodeling of xylans in vascular development. The protein is Beta-D-xylosidase 1 (BXL1) of Arabidopsis thaliana (Mouse-ear cress).